The chain runs to 120 residues: Chaperonin GroEL (120 aa).

An ATP-binding site is contributed by 23–27 (DGTTT).

It belongs to the chaperonin (HSP60) family. In terms of assembly, forms a cylinder of 14 subunits composed of two heptameric rings stacked back-to-back. Interacts with the co-chaperonin GroES.

The protein resides in the cytoplasm. It catalyses the reaction ATP + H2O + a folded polypeptide = ADP + phosphate + an unfolded polypeptide.. Together with its co-chaperonin GroES, plays an essential role in assisting protein folding. The GroEL-GroES system forms a nano-cage that allows encapsulation of the non-native substrate proteins and provides a physical environment optimized to promote and accelerate protein folding. In Mycobacterium xenopi, this protein is Chaperonin GroEL.